Reading from the N-terminus, the 1223-residue chain is Kinesin-like protein costa (1223 aa).

Positions 4–394 (PIQVAVRICP…LQFAFKVQCV (391 aa)) constitute a Kinesin motor domain. Residues 13 to 90 (PYTEPSENRK…LPTDSNGNEN (78 aa)) are disordered. The segment covering 39 to 62 (AKAESFSDSEDNKNDASNRQRPEE) has biased composition (basic and acidic residues). 178 to 185 (GQRGQGKT) is a binding site for ATP. 3 disordered regions span residues 494–528 (RSQK…ESQR), 560–604 (KHPK…SIQP), and 625–646 (TAQP…ESSA). Residues 569–593 (QERDKESKLDAPPEKDKEKIEERKT) show a composition bias toward basic and acidic residues. Coiled coils occupy residues 658–743 (AAAN…QGRE), 773–825 (ESGQ…GASG), and 982–1015 (NKVI…ERVL). Residues 774–799 (SGQKLKKLQQSMAESRKQQEELEKKI) are disordered. Over residues 787–799 (ESRKQQEELEKKI) the composition is skewed to basic and acidic residues. The segment covering 1162 to 1178 (TTTATATTTTTTTTTTT) has biased composition (low complexity). The tract at residues 1162 to 1188 (TTTATATTTTTTTTTTTGGKGKERGLP) is disordered.

The protein belongs to the TRAFAC class myosin-kinesin ATPase superfamily. Kinesin family. KIF27 subfamily. As to quaternary structure, homodimer (Potential). Binds microtubules. Interacts with ci, smo, sgg, CkIalpha and protein kinase A catalytic subunit.

Its subcellular location is the cytoplasm. The protein localises to the cytoskeleton. Functionally, regulates cubitus interruptus (ci) processing by recruiting multiple kinases to promote its efficient phosphorylation. Scaffolds multiple kinases and ci into proximity to promote its hyperphosphorylation, which then targets it for SCFSlimb/proteasome-mediated processing to generate its repressor form. Hh signaling inhibits ci phosphorylation by interfering with the cos-ci-kinases complex formation. The sequence is that of Kinesin-like protein costa (cos) from Drosophila pseudoobscura pseudoobscura (Fruit fly).